The chain runs to 248 residues: uncharacterized protein (248 aa).

A helical membrane pass occupies residues 104–122 (CDVAACVGATWIAGGFAGA).

It is found in the membrane. This is an uncharacterized protein from Escherichia coli (strain K12).